Reading from the N-terminus, the 593-residue chain is tRNA (guanine(26)-N(2))-dimethyltransferase 1 (593 aa).

Residues 9 to 465 (TVIKEGEAEV…APMEIIWDIM (457 aa)) enclose the Trm1 methyltransferase domain. Arginine 36 is an S-adenosyl-L-methionine binding site. The tract at residues 56-118 (AMLSKRARSS…KTAYESARRE (63 aa)) is disordered. Basic and acidic residues-rich tracts occupy residues 68 to 81 (VVEK…KEET) and 88 to 118 (DNGK…ARRE). Positions 134, 152, and 185 each coordinate S-adenosyl-L-methionine. The Zn(2+) site is built by cysteine 315, cysteine 318, cysteine 350, and cysteine 353. Residues 546–593 (VNGHLNNNHKEAGDEEEEEEEEEPEEDIIEGEPELKRQKTTEDFASTS) are disordered. The segment covering 558 to 577 (GDEEEEEEEEEPEEDIIEGE) has biased composition (acidic residues). Positions 578-587 (PELKRQKTTE) are enriched in basic and acidic residues.

It belongs to the class I-like SAM-binding methyltransferase superfamily. Trm1 family.

It carries out the reaction guanosine(26) in tRNA + 2 S-adenosyl-L-methionine = N(2)-dimethylguanosine(26) in tRNA + 2 S-adenosyl-L-homocysteine + 2 H(+). Its function is as follows. Dimethylates a single guanine residue at position 26 of most tRNAs using S-adenosyl-L-methionine as donor of the methyl groups. The polypeptide is tRNA (guanine(26)-N(2))-dimethyltransferase 1 (Arabidopsis thaliana (Mouse-ear cress)).